A 342-amino-acid chain; its full sequence is S-adenosylmethionine:tRNA ribosyltransferase-isomerase (342 aa).

It belongs to the QueA family. Monomer.

The protein localises to the cytoplasm. It carries out the reaction 7-aminomethyl-7-carbaguanosine(34) in tRNA + S-adenosyl-L-methionine = epoxyqueuosine(34) in tRNA + adenine + L-methionine + 2 H(+). The protein operates within tRNA modification; tRNA-queuosine biosynthesis. Functionally, transfers and isomerizes the ribose moiety from AdoMet to the 7-aminomethyl group of 7-deazaguanine (preQ1-tRNA) to give epoxyqueuosine (oQ-tRNA). The protein is S-adenosylmethionine:tRNA ribosyltransferase-isomerase of Listeria monocytogenes serotype 4b (strain CLIP80459).